The sequence spans 349 residues: MDLTVEPDLNSLITSSTHRWIFVGGKGGVGKTTSSCSIAIQMALAQPEKQYLLISTDPAHNLSDAFGEKFGKDARKVTGMNNLSCMEIDPSAALKDMNDMAVANNATGSGEFSDLLQGGALSELTGSIPGIDEALSFMEVMKHIKNQEQGEGDRYDTVIFDTAPTGHTLRFLQLPSTLSKLLEKFGEITARLGPMLNSLAGANNVDLVGKMSELKSNVEKIKEQFTNPDMTTFVCVCISEFLSLYETERLVQELISYDMDVNSIIVNQLLFAEYDEGDSCKRCQSRWKMQKKYLDQIDELYEDFHIVKMPLCAGEIRGLNNLKKFSQFLRKPYDPVADSKVIYELEQQD.

26–33 is a binding site for ATP; sequence KGGVGKTT. D57 is a catalytic residue. Residues E240 and N267 each contribute to the ATP site. Zn(2+)-binding residues include C280 and C283.

The protein belongs to the arsA ATPase family. In terms of assembly, homodimer. Component of the Golgi to ER traffic (GET) complex, which is composed of GET1, GET2 and GET3. Within the complex, GET1 and GET2 form a heterotetramer which is stabilized by phosphatidylinositol binding and which binds to the GET3 homodimer. Interacts with the chloride channel protein GEF1.

The protein localises to the cytoplasm. It is found in the endoplasmic reticulum. The protein resides in the golgi apparatus. ATPase required for the post-translational delivery of tail-anchored (TA) proteins to the endoplasmic reticulum. Recognizes and selectively binds the transmembrane domain of TA proteins in the cytosol. This complex then targets to the endoplasmic reticulum by membrane-bound receptors GET1 and GET2, where the tail-anchored protein is released for insertion. This process is regulated by ATP binding and hydrolysis. ATP binding drives the homodimer towards the closed dimer state, facilitating recognition of newly synthesized TA membrane proteins. ATP hydrolysis is required for insertion. Subsequently, the homodimer reverts towards the open dimer state, lowering its affinity for the GET1-GET2 receptor, and returning it to the cytosol to initiate a new round of targeting. Cooperates with the HDEL receptor ERD2 to mediate the ATP-dependent retrieval of resident ER proteins that contain a C-terminal H-D-E-L retention signal from the Golgi to the ER. Involved in low-level resistance to the oxyanions arsenite and arsenate, and in heat tolerance. This is ATPase GET3 from Kluyveromyces lactis (strain ATCC 8585 / CBS 2359 / DSM 70799 / NBRC 1267 / NRRL Y-1140 / WM37) (Yeast).